The following is a 955-amino-acid chain: 2-oxoglutarate dehydrogenase E1 component (955 aa).

It belongs to the alpha-ketoglutarate dehydrogenase family. As to quaternary structure, homodimer. Part of the 2-oxoglutarate dehydrogenase (OGDH) complex composed of E1 (2-oxoglutarate dehydrogenase), E2 (dihydrolipoamide succinyltransferase) and E3 (dihydrolipoamide dehydrogenase); the complex contains multiple copies of the three enzymatic components (E1, E2 and E3). It depends on thiamine diphosphate as a cofactor.

The catalysed reaction is N(6)-[(R)-lipoyl]-L-lysyl-[protein] + 2-oxoglutarate + H(+) = N(6)-[(R)-S(8)-succinyldihydrolipoyl]-L-lysyl-[protein] + CO2. Functionally, E1 component of the 2-oxoglutarate dehydrogenase (OGDH) complex which catalyzes the decarboxylation of 2-oxoglutarate, the first step in the conversion of 2-oxoglutarate to succinyl-CoA and CO(2). The sequence is that of 2-oxoglutarate dehydrogenase E1 component from Bacillus cereus (strain ZK / E33L).